The chain runs to 401 residues: MKKLWQNCHIATMQNGQYSYIEDAAIVTEGHLIHWIGKQQQLPTDTYSETVDLNGAWVTPGFIDCHTHSVFGGNRSVEFEKRLQGVSYAEIAASGGGIASTVRATREASEEQLLNSALKRIRCMQQDGVTTIEIKSGYGLNYENERKMLRVIRQIGEKLPMTVKSTCLAAHALPPEYKDQSDAYIEHICTEMLPKLHAEGLVDAVDAFCEHLAFSPAQVERVFKTAQSLGLPVKLHAEQLSSLGGSSLAARYHALSADHLEYMTEDDVKAMAASGTVAVLLPGAFYLLRETQYPPIESLIKHGVRIALSSDLNPGTSPALSLRLMLNMGSTLFRLTPEQALAGVTIHAAQALGLEQTHGSLEQGKVADFVAWDIEHPSEIVYWLGGDLPKRVVQHGQEVIF.

The Fe(3+) site is built by H66 and H68. Zn(2+) contacts are provided by H66 and H68. 4-imidazolone-5-propanoate-binding residues include R75, Y138, and H171. Residue Y138 participates in N-formimidoyl-L-glutamate binding. H236 serves as a coordination point for Fe(3+). H236 contacts Zn(2+). Q239 is a 4-imidazolone-5-propanoate binding site. D311 contributes to the Fe(3+) binding site. Position 311 (D311) interacts with Zn(2+). N313 and G315 together coordinate N-formimidoyl-L-glutamate. T316 contacts 4-imidazolone-5-propanoate.

This sequence belongs to the metallo-dependent hydrolases superfamily. HutI family. Requires Zn(2+) as cofactor. Fe(3+) is required as a cofactor.

Its subcellular location is the cytoplasm. It carries out the reaction 4-imidazolone-5-propanoate + H2O = N-formimidoyl-L-glutamate. The protein operates within amino-acid degradation; L-histidine degradation into L-glutamate; N-formimidoyl-L-glutamate from L-histidine: step 3/3. Functionally, catalyzes the hydrolytic cleavage of the carbon-nitrogen bond in imidazolone-5-propanoate to yield N-formimidoyl-L-glutamate. It is the third step in the universal histidine degradation pathway. In Acinetobacter baumannii (strain ACICU), this protein is Imidazolonepropionase.